We begin with the raw amino-acid sequence, 313 residues long: NADH-ubiquinone oxidoreductase chain 1 (313 aa).

The next 8 helical transmembrane spans lie at 5-25, 75-95, 104-124, 151-171, 175-195, 227-247, 251-271, and 293-313; these read LFMFVLNFLLLIICVLISVAF, FLYYFSPVFNLMLSLLIWVIF, FPYGFYFLCCTSLSVYTFMIA, LALILLSLIILIGSFNMLYFM, LYCWFIVFSFPLALSFFGSSL, LIFLAEYSSIIFMSMLFSLIF, DFYSFYFFFKLSLVSFFFVWV, and PLSLNFLFFFIGLSVMFFSII.

The protein belongs to the complex I subunit 1 family.

The protein localises to the mitochondrion inner membrane. It catalyses the reaction a ubiquinone + NADH + 5 H(+)(in) = a ubiquinol + NAD(+) + 4 H(+)(out). Core subunit of the mitochondrial membrane respiratory chain NADH dehydrogenase (Complex I) that is believed to belong to the minimal assembly required for catalysis. Complex I functions in the transfer of electrons from NADH to the respiratory chain. The immediate electron acceptor for the enzyme is believed to be ubiquinone. The sequence is that of NADH-ubiquinone oxidoreductase chain 1 (ND1) from Locusta migratoria (Migratory locust).